A 1231-amino-acid chain; its full sequence is MTSNRKNENEIINALSIPAVSNHSAQMDLSLDARIEDSLCIAEGNNINPLVSASTVQTGINIAGRILGVLGVPFAGQLASFYSFLVGELWPSGRDPWEIFLEHVEQLIRQQVTENTRNTAIARLEGLGRGYRSYQQALETWLDNRNDARSRSIILERYVALELDITTAIPLFRIRNEEVPLLMVYAQAANLHLLLLRDASLFGSEWGMASSDVNQYYQEQIRYTEEYSNHCVQWYNTGLNNLRGTNAESWLRYNQFRRDLTLGVLDLVALFPSYDTRTYPINTSAQLTREIYTDPIGRTNAPSGFASTNWFNNNAPSFSAIEAAIFRPPHLLDFPEQLTIYSASSRWSSTQHMNYWVGHRLNFRPIGGTLNTSTQGLTNNTSINPVTLQFTSRDVYRTESNAGTNILFTTPVNGVPWARFNFINPQNIYERGATTYSQPYQGVGIQLFDSETELPPETTERPNYESYSHRLSHIGLIIGNTLRAPVYSWTHRSADRTNTIGPNRITQIPAVKGRFLFNGSVISGPGFTGGDVVRLNRNNGNIQNRGYIEVPIQFTSTSTRYRVRVRYASVTSIELNVNLGNSSIFTNTLPATAASLDNLQSGDFGYVEINNAFTSATGNIVGARNFSANAEVIIDRFEFIPVTATFEAEYDLERAQKAVNALFTSTNPRRLKTDVTDYHIDQVSNMVACLSDEFCLDEKRELFEKVKYAKRLSDERNLLQDPNFTFISGQLSFASIDGQSNFTSINELSEHGWWGSENVTIQEGNDVFKENYVTLPGTFNECYPNYLYQKIGESELKAYTRYQLRGYIEDSQDLEIYLIRYNAKHETLDVPGTDSLWPLSVKSPIGRCGEPNRCAPHFEWNPDLDCSCRDGERCAHHSHHFTLDIDVGCTDLHENLGVWVVFKIKTQEGYARLGNLEFIEEKPLIGEALSRVKRAEKKWRDKREKLQLETKRVYTEAKETVDALFVDSHYNRLQADTNIGMIHAADRLVHRIHEAYLPELPFIPGINAVIFEELENRISTAFSLYDARNVIKNGDFNNGLSCWNVKGHVDVQQSHHRSDLVIPEWEAEVSQAVRVCPGRGYILRVTAYKEGYGEGCVTIHEIENNTDELKFKNCEEEEVYPTDTGTCNDYTAHQGTAACNSRNAGYEDAYEVDTTASVNYKPTYEEETYTDVRRDNHCEYDRGYVNYPPVPAGYVTKELEYFPETDTVWIEIGETEGKFIVDSVELLLMEE.

The protein belongs to the delta endotoxin family.

Promotes colloidosmotic lysis by binding to the midgut epithelial cells of lepidopteran larvae. Toxic to Plutella xylostella. This is Pesticidal crystal protein Cry1Bd (cry1Bd) from Bacillus thuringiensis subsp. wuhanensis.